A 223-amino-acid chain; its full sequence is GTP cyclohydrolase 1 (223 aa).

Zn(2+) is bound by residues cysteine 114, histidine 117, and cysteine 185.

This sequence belongs to the GTP cyclohydrolase I family. Homomer.

The enzyme catalyses GTP + H2O = 7,8-dihydroneopterin 3'-triphosphate + formate + H(+). It functions in the pathway cofactor biosynthesis; 7,8-dihydroneopterin triphosphate biosynthesis; 7,8-dihydroneopterin triphosphate from GTP: step 1/1. The polypeptide is GTP cyclohydrolase 1 (Chlorobium phaeovibrioides (strain DSM 265 / 1930) (Prosthecochloris vibrioformis (strain DSM 265))).